Here is a 449-residue protein sequence, read N- to C-terminus: Tubulin alpha-8 chain (449 aa).

Positions 1-4 match the MREC motif motif; the sequence is MREC. The GTP site is built by glutamine 11, glutamate 71, serine 140, glycine 144, threonine 145, threonine 179, asparagine 206, and asparagine 228. Glutamate 71 contributes to the Mg(2+) binding site. Glutamate 254 is an active-site residue.

Belongs to the tubulin family. In terms of assembly, dimer of alpha and beta chains. A typical microtubule is a hollow water-filled tube with an outer diameter of 25 nm and an inner diameter of 15 nM. Alpha-beta heterodimers associate head-to-tail to form protofilaments running lengthwise along the microtubule wall with the beta-tubulin subunit facing the microtubule plus end conferring a structural polarity. Microtubules usually have 13 protofilaments but different protofilament numbers can be found in some organisms and specialized cells. Mg(2+) is required as a cofactor. In terms of processing, some glutamate residues at the C-terminus are polyglycylated, resulting in polyglycine chains on the gamma-carboxyl group. Glycylation is mainly limited to tubulin incorporated into axonemes (cilia and flagella) whereas glutamylation is prevalent in neuronal cells, centrioles, axonemes, and the mitotic spindle. Both modifications can coexist on the same protein on adjacent residues, and lowering polyglycylation levels increases polyglutamylation, and reciprocally. Cilia and flagella glycylation is required for their stability and maintenance. Flagella glycylation controls sperm motility. Post-translationally, some glutamate residues at the C-terminus are polyglutamylated, resulting in polyglutamate chains on the gamma-carboxyl group. Polyglutamylation plays a key role in microtubule severing by spastin (SPAST). SPAST preferentially recognizes and acts on microtubules decorated with short polyglutamate tails: severing activity by SPAST increases as the number of glutamates per tubulin rises from one to eight, but decreases beyond this glutamylation threshold. Glutamylation is also involved in cilia motility. The C-terminal phenylalanine residue is cleaved by MATCAP1/KIAA0895L.

Its subcellular location is the cytoplasm. It localises to the cytoskeleton. It catalyses the reaction GTP + H2O = GDP + phosphate + H(+). Functionally, tubulin is the major constituent of microtubules, a cylinder consisting of laterally associated linear protofilaments composed of alpha- and beta-tubulin heterodimers. Microtubules grow by the addition of GTP-tubulin dimers to the microtubule end, where a stabilizing cap forms. Below the cap, tubulin dimers are in GDP-bound state, owing to GTPase activity of alpha-tubulin. This is Tubulin alpha-8 chain (Tuba8) from Rattus norvegicus (Rat).